Consider the following 489-residue polypeptide: MGLFGMMKFAHTHHLVKRQGLGAPAGYFTPIAVDLWNVMYTLVVKYQRRYPSYDREAITLHCLCRLLKVFTQKSLFPIFVTDRGVNCMEPVVFGAKAILARTTAQCRTDEEASDVDASPPPSPITDSRPSSAFSNMRRRGTSLASGTRGTAGSGAALPSAAPSKPALRLAHLFCIRVLRALGYAYINSGQLEADDACANLYHTNTVAYVYTTDTDLLLMGCDIVLDISACYIPTINCRDILKYFKMSYPQFLALFVRCHTDLHPNNTYASVEDVLRECHWTPPSRSQTRRAIRREHTSSRSTETRPPLPPAAGGTEMRVSWTEILTQQIAGGYEDDEDLPLDPRDVTGGHPGPRSSSSEILTPPELVQVPNAQLLEEHRSYVASRRRHVIHDAPESLDWLPDPMTITELVEHRYIKYVISLIGPKERGPWTLLKRLPIYQDIRDENLARSIVTRHITAPDIADRFLEQLRTQAPPPAFYKDVLAKFWDE.

Disordered regions lie at residues 110–135, 142–161, 285–316, and 333–363; these read EEASDVDASPPPSPITDSRPSSAFSN, SLASGTRGTAGSGAALPSAA, RSQTRRAIRREHTSSRSTETRPPLPPAAGGTE, and YEDDEDLPLDPRDVTGGHPGPRSSSSEILTP. The segment covering 124 to 134 has biased composition (polar residues); it reads ITDSRPSSAFS.

Belongs to the herpesviridae VHS protein family. In terms of assembly, interacts with human EIF4H, EIF4A1 and EIF4A2; interaction with eIF4AI and EIF4A2 presumably allows Vhs protein to associate with the eIF4F cap-binding complex.

It is found in the virion. Its function is as follows. Minor structural protein that acts as an endoribonuclease during lytic infection. Degrades host mRNAs in the cytoplasm by cutting them at preferred sites, including some in regions of translation initiation. Together with inhibition of host splicing by ICP27, contributes to an overall decrease in host protein synthesis. Also, after the onset of viral transcription, accelerates the turnover of viral mRNA, thereby facilitating the sequential expression of different classes of viral genes. Binds translation initiation factors eIF4H, eIF4AI, and eIF4AII, thereby may interact directly with the translation initiation complex and thus digest specifically mRNAs. Also impedes antigen presentation by major histocompatibility complex class I and class II molecules, inhibits secretion of cytokines that would otherwise recruit lymphocytes and neutrophils cells to the site of infection and blocks the activation of dendritic cells. Impedes the alpha/beta interferon-mediated response to infection by evading the cGAS/ STING-mediated DNA-sensing pathway and degrading CGAS via its RNase activity. The polypeptide is Virion host shutoff protein (UL41) (Human herpesvirus 1 (strain KOS) (HHV-1)).